Here is a 508-residue protein sequence, read N- to C-terminus: MGGLTLFAAQGCKAPKQVAEQAEHPNIIYVFPDQYRNQAMGFWNQEGFRDKVNFRGDPVHTPNIDTFARESMVLTSAQSNCPLSSPHRGMLLTGMYPNRSGVPLNCNSTRPISSLRDDAECIGDVFSKAGYDCAYFGKLHADFPTPNDPENPGQYVETQRPVWDAYTPKEQRHGFNYWYSYGTFDEHKNPHYWDTDGKRHDPKEWSPLHESGKVVSYLKNEGNVRDTKKPFFIMVGMNPPHSPYRSLNDCEEQDFNLYKDQPLDSLLIRPNVDLNMKKAESVRYYFASVTGVDRAFGQILEALKQLGLDKNTVVIFASDHGETMCSQRTDDPKNSPYSESMNIPFLVRFPGKIQPRVDDLLLSAPDIMPTVLGLCGLGDSIPSEVQGRNFAPLFFDEKAEIVRPAGALYIQNLDGEKDKDGLVQSYFPSSRGIKTARYTLALYIDRKTKQLKKSLLFDDVNDPYQLNNLPLDENKEVVEQLYREMGTMLKEIDDPWYTEKILSDRIPY.

Position 84 is a 3-oxoalanine (Ser) (serine 84).

It belongs to the sulfatase family. Post-translationally, the conversion to 3-oxoalanine (also known as C-formylglycine, FGly), of a serine or cysteine residue in prokaryotes and of a cysteine residue in eukaryotes, is critical for catalytic activity.

Functionally, endosulfatase involved in the degradation of the glycosaminoglycans (GAGs) chondroitin sulfate (CS) and dermatan sulfate (DS). Efficiently hydrolyzes sulfate groups from a broad range of substrate size, including disaccharide to high molecular weight CS and DS polymers. Has a strict specificity for the 4-O-sulfate groups of galactosamine. GAG-specific sulfatases play a key role in the persistence of the major human gut symbiont B.thetaiotaomicron in the host gastrointestinal tract. The chain is Endo-4-O-sulfatase from Bacteroides thetaiotaomicron (strain ATCC 29148 / DSM 2079 / JCM 5827 / CCUG 10774 / NCTC 10582 / VPI-5482 / E50).